The primary structure comprises 487 residues: 1,4-beta-D-glucan cellobiohydrolase CEL6A (487 aa).

The signal sequence occupies residues 1–17 (MASKLFLAAALLQGALS). In terms of domain architecture, CBM1 spans 27–63 (ACAAQWGQCGGQDYTGPTCCQSGSTCVVSNQWYSQCL). 2 disulfide bridges follow: C35–C52 and C46–C62. Positions 64-117 (PGSSNPTTTSRTSTSSSSSTSRTSSSTSRPPSSVPTTPTSVPPTITTTPTTTPT) are enriched in low complexity. Residues 64 to 127 (PGSSNPTTTS…GGSGPGTTAS (64 aa)) form a disordered region. Residues W175 and D177 each contribute to the substrate site. The active site involves D216. The active-site Proton donor is the D262. 6 residues coordinate substrate: H307, W310, N346, W407, K435, and E439. D441 serves as the catalytic Proton acceptor.

This sequence belongs to the glycosyl hydrolase 6 (cellulase B) family.

Its subcellular location is the secreted. The enzyme catalyses Hydrolysis of (1-&gt;4)-beta-D-glucosidic linkages in cellulose and cellotetraose, releasing cellobiose from the non-reducing ends of the chains.. Exoglucanase that plays an important function in biomass degradation by catalyzing the hydrolysis of the non-reducing end beta-1,4-glucosidic linkages in cellulose and cellotetraose to release cellobiose. Shows higher hydrolytic activities on phosphoric acid-swollen cellulose (PSC), beta-glucan, and cellooligosaccharide derivatives than on cellulose, of which the best substrates were cellooligosaccharides. In Pyricularia oryzae (strain 70-15 / ATCC MYA-4617 / FGSC 8958) (Rice blast fungus), this protein is 1,4-beta-D-glucan cellobiohydrolase CEL6A.